A 713-amino-acid polypeptide reads, in one-letter code: Segment polarity protein dishevelled homolog DVL-3 (713 aa).

Residues 1-82 (MGETKVIYHL…RVVCWLVSAD (82 aa)) form the DIX domain. Polar residues-rich tracts occupy residues 87-98 (DAGSVCADNQSD) and 118-127 (HPNTRGSQEN). The segment at 87-235 (DAGSVCADNQ…PRIERSSSFS (149 aa)) is disordered. A compositionally biased stretch (basic and acidic residues) spans 140-155 (AHRERPRRKETPEHAT). Over residues 173–189 (ESSSTLMSSELDSTSFF) the composition is skewed to low complexity. Residues 199-210 (RFSNSTEQSSAS) show a composition bias toward polar residues. The span at 212–225 (LMRRHKRRRRKPKA) shows a compositional bias: basic residues. The region spanning 248–333 (TVTLNMEKYN…KPGPITLTVA (86 aa)) is the PDZ domain. Residues 421-495 (PESGLEVRDR…SEQCYYIFGD (75 aa)) form the DEP domain. Positions 508–518 (HDGSSGTSDQD) are enriched in polar residues. Disordered stretches follow at residues 508–527 (HDGSSGTSDQDTLAPLPHPG) and 545–652 (YSPH…GPPG). Over residues 564–579 (GSQHSEGSRSSGSNRS) the composition is skewed to low complexity. Basic and acidic residues-rich tracts occupy residues 580–593 (STEKRKEREAKGGD) and 602–618 (ESDHTTRSSVRRERAAS). The span at 629 to 646 (HRSHHSIAHSIRSHHTHH) shows a compositional bias: basic residues.

It belongs to the DSH family.

The protein resides in the cytoplasm. Functionally, involved in the signal transduction pathway mediated by multiple Wnt genes. Required during ciliogenesis for the docking of basal bodies to the apical plasma membrane. The sequence is that of Segment polarity protein dishevelled homolog DVL-3 from Xenopus tropicalis (Western clawed frog).